The primary structure comprises 2085 residues: Protein MLP1 homolog (2085 aa).

Coiled coils occupy residues 44 to 367, 399 to 513, 568 to 630, 675 to 1205, 1232 to 1667, and 1744 to 1799; these read KIRE…SHDG, KATQ…HVLI, YELQ…RMKS, ANEA…KRTQ, LRRE…LQQE, and EIEA…AAKE. Residues 365–398 are disordered; it reads HDGVPGSVPQTPRANGSLLARPSSPFGTPASLRG. Residues 934–953 are disordered; it reads AERLRPLPTPRAPAAAEQPS. A Nuclear localization signal motif is present at residues 1159–1166; it reads ERRQRLEQ. A compositionally biased stretch (polar residues) spans 1482-1503; it reads LATATEKNTSLQQQLAASSTEQ. Disordered stretches follow at residues 1482–1514 and 1567–1591; these read LATA…AAPS and SGGD…DEER. Residues 1504–1514 show a composition bias toward low complexity; the sequence is PAAAPVSAAPS. A compositionally biased stretch (polar residues) spans 1574 to 1584; sequence AETSVSAQPSA. The disordered stretch occupies residues 1816-2085; that stretch reads KPPAPAQAPA…GGGGGGGGNQ (270 aa). Pro residues predominate over residues 1817 to 1827; sequence PPAPAQAPAPA. Low complexity-rich tracts occupy residues 1843 to 1858, 1910 to 1974, and 1982 to 1994; these read VAPA…QAPS, QAGQ…PVPA, and ARTA…AGPR. The span at 1995 to 2016 shows a compositional bias: gly residues; sequence GARGGRGGGFVGAGRGAGGAAG. The segment covering 2028 to 2040 has biased composition (low complexity); it reads GGATATAAAAAAA. 2 stretches are compositionally biased toward gly residues: residues 2041–2051 and 2076–2085; these read GGAGGSAGAGN and GGGGGGGGNQ.

The nuclear pore complex (NPC) constitutes the exclusive means of nucleocytoplasmic transport. NPCs allow the passive diffusion of ions and small molecules and the active, nuclear transport receptor-mediated bidirectional transport of macromolecules such as proteins, RNAs, ribonucleoparticles (RNPs), and ribosomal subunits across the nuclear envelope. The 55-60 MDa NPC is composed of at least 28 different subunits: AMO1, ELYS, GLE1, GLE2, MLP1, NDC1, NIC96, NSP1, NUP133, NUP145, NUP152, NUP159, NUP170, NUP188, NUP192, NUP37, NUP49, NUP53, NUP56, NUP57, NUP82, NUP84, NUP85, POM152, POM33, POM34, SEC13 and SEH1. Due to its 8-fold rotational symmetry, all subunits are present with 8 copies or multiples thereof.

The protein resides in the nucleus. Its function is as follows. Involved in the structural and functional organization of perinuclear chromatin. Associates with the nuclear pore complex and form filamentous structures along the nuclear periphery. This Chaetomium thermophilum (strain DSM 1495 / CBS 144.50 / IMI 039719) (Thermochaetoides thermophila) protein is Protein MLP1 homolog (MLP1).